Consider the following 86-residue polypeptide: Small ribosomal subunit protein bS20 (86 aa).

This sequence belongs to the bacterial ribosomal protein bS20 family.

Binds directly to 16S ribosomal RNA. The protein is Small ribosomal subunit protein bS20 of Aliarcobacter butzleri (strain RM4018) (Arcobacter butzleri).